Here is a 322-residue protein sequence, read N- to C-terminus: Lung adenoma susceptibility protein 2 homolog (322 aa).

Residues 1–31 (MAKSKTKHRLCSRESSVSSLLASCSLSDSNS) form the signal peptide. Residues 148-157 (TNKKNKKCHG) are compositionally biased toward basic residues. Disordered stretches follow at residues 148–175 (TNKK…GPST) and 228–248 (FKSP…RAKS). Serine 161 carries the phosphoserine modification. The segment covering 236–247 (SDDSPQQTSRAK) has biased composition (polar residues).

The protein localises to the secreted. In terms of biological role, might play a role in cell proliferation. This Macaca fascicularis (Crab-eating macaque) protein is Lung adenoma susceptibility protein 2 homolog (LAS2).